Here is a 338-residue protein sequence, read N- to C-terminus: NADPH dehydrogenase (338 aa).

Residue 22-25 (SPMC) participates in FMN binding. Substrate is bound at residue Y27. Residues A59 and Q101 each coordinate FMN. 163–166 (HAAH) contacts substrate. Residues R214 and 306–307 (GR) each bind FMN.

This sequence belongs to the NADH:flavin oxidoreductase/NADH oxidase family. NamA subfamily. Homotetramer. Requires FMN as cofactor.

The enzyme catalyses A + NADPH + H(+) = AH2 + NADP(+). Catalyzes the reduction of the double bond of an array of alpha,beta-unsaturated aldehydes and ketones. It also reduces the nitro group of nitroester and nitroaromatic compounds. It could have a role in detoxification processes. This Listeria monocytogenes serotype 4a (strain HCC23) protein is NADPH dehydrogenase.